A 1434-amino-acid chain; its full sequence is Probable ATP-dependent RNA helicase spindle-E (1434 aa).

Residues Val66–Asp86 form a disordered region. Positions Met127–Val294 constitute a Helicase ATP-binding domain. Position 140–147 (Gly140–Thr147) interacts with ATP. Positions Asp240–His243 match the DEAH box motif. Residues Gln354 to Asp526 form the Helicase C-terminal domain. In terms of domain architecture, Tudor spans Ala938–Asp1001.

It belongs to the DEAD box helicase family. DEAH subfamily.

The protein localises to the cytoplasm. The catalysed reaction is ATP + H2O = ADP + phosphate + H(+). Its function is as follows. Probable ATP-binding RNA helicase which plays a central role during spermatogenesis and oogenesis by repressing transposable elements and preventing their mobilization, which is essential for the germline integrity. Acts via the piRNA metabolic process, which mediates the repression of transposable elements during meiosis by forming complexes composed of piRNAs and Piwi and govern the methylation and subsequent repression of transposons. Involved in the repression of LTR retrotransposon copia. Also involved in telomere regulation by repressing specialized telomeric retroelements HeT-A, TAHRE, and TART; Drosophila telomeres being maintained by transposition of specialized telomeric retroelements. Involved in telomeric trans-silencing, a repression mechanism by which a transposon or a transgene inserted in subtelomeric heterochromatin has the capacity to repress in trans in the female germline, a homologous transposon, or transgene located in euchromatin. Involved in the repression of testis-expressed Stellate genes by the homologous Su(Ste) repeats. Required for anteroposterior and dorsoventral axis formation during oogenesis. This Drosophila grimshawi (Hawaiian fruit fly) protein is Probable ATP-dependent RNA helicase spindle-E (spn-E).